A 154-amino-acid chain; its full sequence is 6,7-dimethyl-8-ribityllumazine synthase (154 aa).

5-amino-6-(D-ribitylamino)uracil-binding positions include Phe-22, 56–58 (AFE), and 80–82 (TVI). 85 to 86 (AT) contacts (2S)-2-hydroxy-3-oxobutyl phosphate. The Proton donor role is filled by His-88. Phe-113 serves as a coordination point for 5-amino-6-(D-ribitylamino)uracil. Arg-127 lines the (2S)-2-hydroxy-3-oxobutyl phosphate pocket.

The protein belongs to the DMRL synthase family. As to quaternary structure, forms an icosahedral capsid composed of 60 subunits, arranged as a dodecamer of pentamers.

The catalysed reaction is (2S)-2-hydroxy-3-oxobutyl phosphate + 5-amino-6-(D-ribitylamino)uracil = 6,7-dimethyl-8-(1-D-ribityl)lumazine + phosphate + 2 H2O + H(+). The protein operates within cofactor biosynthesis; riboflavin biosynthesis; riboflavin from 2-hydroxy-3-oxobutyl phosphate and 5-amino-6-(D-ribitylamino)uracil: step 1/2. Its function is as follows. Catalyzes the formation of 6,7-dimethyl-8-ribityllumazine by condensation of 5-amino-6-(D-ribitylamino)uracil with 3,4-dihydroxy-2-butanone 4-phosphate. This is the penultimate step in the biosynthesis of riboflavin. The polypeptide is 6,7-dimethyl-8-ribityllumazine synthase (Bacillus pumilus (strain SAFR-032)).